The primary structure comprises 37 residues: Large ribosomal subunit protein bL36 (37 aa).

This sequence belongs to the bacterial ribosomal protein bL36 family.

The protein is Large ribosomal subunit protein bL36 of Shewanella woodyi (strain ATCC 51908 / MS32).